The chain runs to 440 residues: Elongation factor 1-gamma (440 aa).

The residue at position 2 (Ala-2) is an N-acetylalanine. The region spanning 2 to 87 (AAGTLYTYPE…YVSNEELRGS (86 aa)) is the GST N-terminal domain. One can recognise a GST C-terminal domain in the interval 88-216 (TPEAAAQVVQ…VKLCEKMAQF (129 aa)). N6-acetyllysine occurs at positions 147 and 212. Residues 221-257 (FAESQPKKDTPRKEKGSREEKLKPQAERKEGKEEKKA) show a composition bias toward basic and acidic residues. The disordered stretch occupies residues 221–267 (FAESQPKKDTPRKEKGSREEKLKPQAERKEGKEEKKAAAPAPEEELD). A Glycyl lysine isopeptide (Lys-Gly) (interchain with G-Cter in SUMO1) cross-link involves residue Lys-256. Residues 279 to 440 (AKDPFAHLPK…KAFNQGKIFK (162 aa)) form the EF-1-gamma C-terminal domain. A Glycyl lysine isopeptide (Lys-Gly) (interchain with G-Cter in SUMO2) cross-link involves residue Lys-288. Lys-404 bears the N6-acetyllysine mark. Lys-437 is subject to N6-acetyllysine; alternate. Lys-437 carries the post-translational modification N6-malonyllysine; alternate.

In terms of assembly, EF-1 is composed of four subunits: alpha, beta, delta, and gamma.

Functionally, probably plays a role in anchoring the complex to other cellular components. The sequence is that of Elongation factor 1-gamma (EEF1G) from Bos taurus (Bovine).